The sequence spans 455 residues: Beta-cyclopiazonate dehydrogenase (455 aa).

A signal peptide spans 1 to 25 (MAVRIARFLGLSTVAYLALANGIDA).

It belongs to the beta-cyclopiazonate dehydrogenase family. FAD is required as a cofactor.

It catalyses the reaction beta-cyclopiazonate + A = alpha-cyclopiazonate + AH2. Its function is as follows. Beta-cyclopiazonate dehydrogenase involved in the synthesis of the fungal neurotoxin alpha-cyclopiazonic acid (CPA). CpaO carries out the dehydrogenation of beta-CPA to yield an unstable enimine product, which is captured by intramolecular cyclization to create the pentacyclic fused scaffold of alpha-cyclopiazonate. This Aspergillus oryzae (strain ATCC 42149 / RIB 40) (Yellow koji mold) protein is Beta-cyclopiazonate dehydrogenase.